The sequence spans 939 residues: Trafficking kinesin-binding protein 1 (939 aa).

An HAP1 N-terminal domain is found at 46-353; it reads LEEQLPHYKL…EELKNLRNKT (308 aa). Residues 106 to 354 are a coiled coil; the sequence is KTYNDIDAVT…ELKNLRNKTM (249 aa). An interaction with HGS region spans residues 359-509; sequence RYHSLGLFPM…SLRRENYLSE (151 aa). An O-linked (GlcNAc) serine glycan is attached at S444. Residues 472 to 492 are disordered; it reads LGNEDHNKKPGTPGTPGSHDL. Positions 490–524 form a coiled coil; it reads HDLETALRRLSLRRENYLSERRFFEEEQERKLREL. S534 carries the post-translational modification Phosphoserine. Residues 655-669 form an interaction with OGT region; sequence PGKCMSQTNSTFTFT. O-linked (GlcNAc) serine glycosylation is found at S677 and S716. Phosphoserine occurs at positions 716 and 905.

Belongs to the milton family. As to quaternary structure, interacts with RHOT1 and RHOT2. Found in a complex with KIF5B, OGT, RHOT1 and RHOT2. Interacts with HGS. Interacts with GABRA1. Interacts with KIF5C. Interacts with OGT; stable interaction is not required for glycosylation of this protein by OGT. Isoform 1 interacts with OGT. Post-translationally, O-glycosylated. Glycosylated by OGT; glycosylation in response to increased extracellular glucose levels is required for and leads to regulation of mitochondrial motility by OGT. As to expression, widely expressed with the greatest expression in brain, liver and kidney. Detected throughout the CNS, including the cortex, hippocamps, thalamus and various subcortical nuclei of the forebrain and midbrain, the granule of Purkinje layers of the cerebellum and the gray matter of the spinal cord. High level detected in lower moter neurons (at protein level).

It localises to the cytoplasm. The protein localises to the nucleus. It is found in the mitochondrion. The protein resides in the early endosome. Its subcellular location is the endosome. It localises to the mitochondrion membrane. The protein localises to the cell cortex. In terms of biological role, involved in the regulation of endosome-to-lysosome trafficking, including endocytic trafficking of EGF-EGFR complexes and GABA-A receptors. Involved in mitochondrial motility. When O-glycosylated, abolishes mitochondrial motility. Crucial for recruiting OGT to the mitochondrial surface of neuronal processes. TRAK1 and RHOT form an essential protein complex that links KIF5 to mitochondria for light chain-independent, anterograde transport of mitochondria. The polypeptide is Trafficking kinesin-binding protein 1 (Trak1) (Mus musculus (Mouse)).